A 208-amino-acid chain; its full sequence is UPF0319 protein VSAL_I2129 (208 aa).

Residues 1 to 21 (MKFHSFLAAGLCLLTSLSASA) form the signal peptide.

Belongs to the UPF0319 family.

This chain is UPF0319 protein VSAL_I2129, found in Aliivibrio salmonicida (strain LFI1238) (Vibrio salmonicida (strain LFI1238)).